Consider the following 997-residue polypeptide: Protein translocase subunit SecA (997 aa).

Residues Gln-102, 120–124 (GEGKT), and Asp-521 contribute to the ATP site. The tract at residues 893–997 (PADASPNGVV…KYKKCHGAEA (105 aa)) is disordered. Residues 938–953 (AIEREFEKKKQQELSH) show a composition bias toward basic and acidic residues. Residues Cys-981, Cys-983, Cys-992, and His-993 each coordinate Zn(2+). The segment covering 987–997 (KKYKKCHGAEA) has biased composition (basic residues).

It belongs to the SecA family. Monomer and homodimer. Part of the essential Sec protein translocation apparatus which comprises SecA, SecYEG and auxiliary proteins SecDF. Other proteins may also be involved. The cofactor is Zn(2+).

The protein localises to the cell inner membrane. The protein resides in the cytoplasm. It carries out the reaction ATP + H2O + cellular proteinSide 1 = ADP + phosphate + cellular proteinSide 2.. Its function is as follows. Part of the Sec protein translocase complex. Interacts with the SecYEG preprotein conducting channel. Has a central role in coupling the hydrolysis of ATP to the transfer of proteins into and across the cell membrane, serving as an ATP-driven molecular motor driving the stepwise translocation of polypeptide chains across the membrane. This is Protein translocase subunit SecA from Acidobacterium capsulatum (strain ATCC 51196 / DSM 11244 / BCRC 80197 / JCM 7670 / NBRC 15755 / NCIMB 13165 / 161).